Consider the following 336-residue polypeptide: Cellodextrinase A (336 aa).

Glutamate 141 serves as the catalytic Proton donor.

Belongs to the glycosyl hydrolase 5 (cellulase A) family.

The protein resides in the secreted. In terms of biological role, crystalline cellulose degradation. The polypeptide is Cellodextrinase A (celA) (Ruminococcus flavefaciens).